A 410-amino-acid polypeptide reads, in one-letter code: 3-phosphoshikimate 1-carboxyvinyltransferase (410 aa).

Positions 27, 28, and 32 each coordinate 3-phosphoshikimate. Residue Lys-27 participates in phosphoenolpyruvate binding. Phosphoenolpyruvate-binding residues include Gly-91 and Arg-119. 3-phosphoshikimate-binding residues include Ser-161, Ser-162, Gln-163, Asp-297, Gln-319, and Lys-323. Gln-163 serves as a coordination point for phosphoenolpyruvate. The active-site Proton acceptor is Asp-297. Phosphoenolpyruvate contacts are provided by Arg-327, Arg-368, and Lys-394.

It belongs to the EPSP synthase family. In terms of assembly, monomer.

Its subcellular location is the cytoplasm. It carries out the reaction 3-phosphoshikimate + phosphoenolpyruvate = 5-O-(1-carboxyvinyl)-3-phosphoshikimate + phosphate. The protein operates within metabolic intermediate biosynthesis; chorismate biosynthesis. Catalyzes the transfer of the enolpyruvyl moiety of phosphoenolpyruvate (PEP) to the 5-hydroxyl of shikimate-3-phosphate (S3P) to produce enolpyruvyl shikimate-3-phosphate and inorganic phosphate. The polypeptide is 3-phosphoshikimate 1-carboxyvinyltransferase (Pyrococcus abyssi (strain GE5 / Orsay)).